We begin with the raw amino-acid sequence, 139 residues long: Small ribosomal subunit protein uS12m (139 aa).

The tract at residues Met1–Ser21 is disordered. Positions Lys11 to Arg20 are enriched in basic residues.

Belongs to the universal ribosomal protein uS12 family.

It localises to the mitochondrion. Functionally, protein S12 is involved in the translation initiation step. The protein is Small ribosomal subunit protein uS12m (RPS12) of Paramecium tetraurelia.